The sequence spans 443 residues: Protein PRRC1 (443 aa).

Disordered stretches follow at residues Met1–Phe108 and Ile139–Ala206. Residues Val34–Met46 show a composition bias toward polar residues. Residues Pro59–Ser80 are compositionally biased toward pro residues. Residues Thr81–Pro96 show a composition bias toward low complexity. Residues Ile169–Ile188 show a composition bias toward polar residues.

This sequence belongs to the PRRC1 family. Interacts with PRKAR1A; resulting in PKA activation.

It is found in the golgi apparatus. The protein resides in the cytoplasm. Functionally, may act as a regulator of the protein kinase A (PKA) during embryonic development. This is Protein PRRC1 (Prrc1) from Rattus norvegicus (Rat).